A 247-amino-acid chain; its full sequence is Probable transcriptional regulatory protein GAU_0635 (247 aa).

It belongs to the TACO1 family.

The protein localises to the cytoplasm. The polypeptide is Probable transcriptional regulatory protein GAU_0635 (Gemmatimonas aurantiaca (strain DSM 14586 / JCM 11422 / NBRC 100505 / T-27)).